Reading from the N-terminus, the 72-residue chain is Translation initiation factor IF-1 (72 aa).

Residues 1 to 72 (MAKEDVIEIE…TRGRITYRFK (72 aa)) form the S1-like domain.

It belongs to the IF-1 family. Component of the 30S ribosomal translation pre-initiation complex which assembles on the 30S ribosome in the order IF-2 and IF-3, IF-1 and N-formylmethionyl-tRNA(fMet); mRNA recruitment can occur at any time during PIC assembly.

The protein resides in the cytoplasm. In terms of biological role, one of the essential components for the initiation of protein synthesis. Stabilizes the binding of IF-2 and IF-3 on the 30S subunit to which N-formylmethionyl-tRNA(fMet) subsequently binds. Helps modulate mRNA selection, yielding the 30S pre-initiation complex (PIC). Upon addition of the 50S ribosomal subunit IF-1, IF-2 and IF-3 are released leaving the mature 70S translation initiation complex. The sequence is that of Translation initiation factor IF-1 from Streptococcus mutans serotype c (strain ATCC 700610 / UA159).